We begin with the raw amino-acid sequence, 206 residues long: Sclerostin domain-containing protein 1 (206 aa).

An N-terminal signal peptide occupies residues 1-22 (MLLSAIHFYGLLLACTFTRSYS). A disordered region spans residues 40 to 68 (APASPSSNSTLNQARNGGRHYAGTGSDRN). The span at 43–54 (SPSSNSTLNQAR) shows a compositional bias: polar residues. An N-linked (GlcNAc...) asparagine glycan is attached at Asn-47. Intrachain disulfides connect Cys-75–Cys-133, Cys-89–Cys-147, Cys-100–Cys-163, and Cys-104–Cys-165. In terms of domain architecture, CTCK spans 75–170 (CRELRSTKYI…TACKCKRYTR (96 aa)). N-linked (GlcNAc...) asparagine glycosylation occurs at Asn-173. Residues 176-206 (SHNFEGTSQAKPVQHHKERKRASKSSKHSTS) are disordered. Positions 188–206 (VQHHKERKRASKSSKHSTS) are enriched in basic residues.

Belongs to the sclerostin family. As to quaternary structure, interacts with LRP6.

The protein localises to the secreted. In terms of biological role, can activate or inhibit Wnt signaling in a context-dependent manner. Activates the canonical Wnt pathway whereby acts through Disheveled proteins and beta-catenin. Antagonises Wnt signaling through the canonical pathways presumably by blocking accessibility of certain WNTs to their receptors. Induces posterior neural markers via components of the canonical Wnt pathway. This is Sclerostin domain-containing protein 1 (SOSTDC1) from Gallus gallus (Chicken).